A 201-amino-acid polypeptide reads, in one-letter code: Large ribosomal subunit protein bL12m (201 aa).

The N-terminal 38 residues, Met-1 to Leu-38, are a transit peptide targeting the mitochondrion. 2 disordered regions span residues Gln-37–Glu-60 and Val-109–Arg-130. Lys-128, Lys-141, Lys-145, and Lys-147 each carry N6-acetyllysine. N6-acetyllysine; alternate is present on Lys-153. Lys-153 bears the N6-succinyllysine; alternate mark. A Glycyl lysine isopeptide (Lys-Gly) (interchain with G-Cter in ubiquitin) cross-link involves residue Lys-153. Lys-165 bears the N6-succinyllysine mark. An N6-acetyllysine mark is found at Lys-166 and Lys-176. Residue Lys-181 is modified to N6-acetyllysine; alternate. At Lys-181 the chain carries N6-succinyllysine; alternate. Lys-188 bears the N6-acetyllysine mark.

The protein belongs to the bacterial ribosomal protein bL12 family. As to quaternary structure, component of the mitochondrial ribosome large subunit (39S) which comprises a 16S rRNA and about 50 distinct proteins. Interacts with NOA1. Two mature forms are produced by differential two-step proteolytic cleavage. Cleaved by the mitochondrial processing protease to produce the long mature form and subsequently by the mitochondrial intermediate protease to produce the short mature form. Post-translationally, in the presence of CUL3, undergoes 'Lys-63'-linked ubiquitination at Lys-153 which results in proteasomal degradation.

Its subcellular location is the mitochondrion matrix. Functionally, as a component of the mitochondrial large ribosomal subunit, plays a role in mitochondrial translation. When present in mitochondria as a free protein not associated with the ribosome, associates with mitochondrial RNA polymerase POLRMT to activate transcription. Required for POLRMT stability. The chain is Large ribosomal subunit protein bL12m (Mrpl12) from Mus musculus (Mouse).